Reading from the N-terminus, the 409-residue chain is Palmitoyltransferase ZDHHC23 (409 aa).

Residues 1-87 (MTQKGSMKPV…RIPWLRGAKK (87 aa)) lie on the Cytoplasmic side of the membrane. The chain crosses the membrane as a helical span at residues 88–106 (VNISIIPPLVLLPVFLHVA). The Lumenal portion of the chain corresponds to 107 to 109 (SWH). Residues 110-132 (FLLGVVVLTSLPVLALWYYYLTH) traverse the membrane as a helical segment. The Cytoplasmic portion of the chain corresponds to 133 to 136 (RRKE). The chain crosses the membrane as a helical span at residues 137-157 (QTLFFLSLGLFSLGYMYYVFL). The Lumenal segment spans residues 158–165 (QEVVPKGR). A helical transmembrane segment spans residues 166–186 (VGPVQLAVLTCGLFLILLALH). Residues 187 to 302 (RAKKNPGYLS…NSCVGESNHQ (116 aa)) lie on the Cytoplasmic side of the membrane. The disordered stretch occupies residues 215–255 (RKGQEKTKGFPGADMSGSLNNRTTKDDPKGSSKMPAGSPTK). The region spanning 259–309 (DWCAKCQLVRPARAWHCRICGICVRRMDHHCVWINSCVGESNHQAFILALL) is the DHHC domain. Cys289 functions as the S-palmitoyl cysteine intermediate in the catalytic mechanism. Residues 303 to 323 (AFILALLIFLLTSVYGITLTL) traverse the membrane as a helical segment. Residues 324–331 (DTICRDRS) are Lumenal-facing. The chain crosses the membrane as a helical span at residues 332 to 352 (VFTALFYCPGVYANYSSALSF). Position 353 (Thr353) is a topological domain, cytoplasmic. A helical membrane pass occupies residues 354 to 374 (CVWYSVIITAGMAYIFLIQLI). The Lumenal portion of the chain corresponds to 375-409 (NISYNVTEREVQQALRQKTGRRLLCGLIVDTGLLG).

This sequence belongs to the DHHC palmitoyltransferase family. In terms of assembly, interacts with NOS1.

It localises to the golgi apparatus membrane. Its subcellular location is the golgi apparatus. It is found in the trans-Golgi network membrane. The catalysed reaction is L-cysteinyl-[protein] + hexadecanoyl-CoA = S-hexadecanoyl-L-cysteinyl-[protein] + CoA. Palmitoyltransferase that could catalyze the addition of palmitate onto various protein substrates and be involved in a variety of cellular processes. Palmitoyltransferase that mediates palmitoylation of KCNMA1, regulating localization of KCNMA1 to the plasma membrane. May be involved in NOS1 regulation and targeting to the synaptic membrane. The chain is Palmitoyltransferase ZDHHC23 from Homo sapiens (Human).